The following is a 338-amino-acid chain: tRNA N6-adenosine threonylcarbamoyltransferase (338 aa).

Residues histidine 111 and histidine 115 each coordinate Fe cation. Substrate contacts are provided by residues 134 to 138, aspartate 167, glycine 180, and asparagine 272; that span reads LVSGG. Aspartate 300 contributes to the Fe cation binding site.

It belongs to the KAE1 / TsaD family. Fe(2+) serves as cofactor.

Its subcellular location is the cytoplasm. The catalysed reaction is L-threonylcarbamoyladenylate + adenosine(37) in tRNA = N(6)-L-threonylcarbamoyladenosine(37) in tRNA + AMP + H(+). Required for the formation of a threonylcarbamoyl group on adenosine at position 37 (t(6)A37) in tRNAs that read codons beginning with adenine. Is involved in the transfer of the threonylcarbamoyl moiety of threonylcarbamoyl-AMP (TC-AMP) to the N6 group of A37, together with TsaE and TsaB. TsaD likely plays a direct catalytic role in this reaction. This is tRNA N6-adenosine threonylcarbamoyltransferase from Vibrio parahaemolyticus serotype O3:K6 (strain RIMD 2210633).